We begin with the raw amino-acid sequence, 277 residues long: Carbonyl reductase [NADPH] 3 (277 aa).

Ser-2 carries the N-acetylserine modification. NADP(+)-binding positions include 10–34 (VTGA…GDVV), 38–42 (RDVAR), 63–64 (DI), and Asn-90. A Phosphoserine modification is found at Ser-30. Residue Ser-140 participates in substrate binding. Tyr-194 acts as the Proton acceptor in catalysis. NADP(+) is bound by residues 194 to 198 (YGVSK) and Asp-239.

Belongs to the short-chain dehydrogenases/reductases (SDR) family. In terms of tissue distribution, detected in ovary, pancreas, intestine, colon, kidney, brain, thymus, lung, heart, liver, spleen, leukocyte, prostate and testis.

It is found in the cytoplasm. The enzyme catalyses a secondary alcohol + NADP(+) = a ketone + NADPH + H(+). The catalysed reaction is a quinone + NADPH + H(+) = a quinol + NADP(+). Its function is as follows. Catalyzes the NADPH-dependent reduction of carbonyl compounds to their corresponding alcohols. Has low NADPH-dependent oxidoreductase activity. Acts on several orthoquinones, acts as well on non-quinone compounds, such as isatin or on the anticancer drug oracin. Best substrates for CBR3 is 1,2- naphthoquinone, hence could play a role in protection against cytotoxicity of exogenous quinones. Exerts activity toward ortho-quinones but not paraquinones. No endogenous substrate for CBR3 except isatin has been identified. This Homo sapiens (Human) protein is Carbonyl reductase [NADPH] 3.